The sequence spans 259 residues: Pimeloyl-[acyl-carrier protein] methyl ester esterase (259 aa).

Residues tryptophan 18, 78–79 (SL), and 139–143 (FLALD) contribute to the substrate site. Catalysis depends on serine 78, which acts as the Nucleophile. Residues aspartate 203 and histidine 231 contribute to the active site. Histidine 231 is a binding site for substrate.

The protein belongs to the AB hydrolase superfamily. Carboxylesterase BioH family. As to quaternary structure, monomer.

The protein resides in the cytoplasm. The enzyme catalyses 6-carboxyhexanoyl-[ACP] methyl ester + H2O = 6-carboxyhexanoyl-[ACP] + methanol + H(+). It functions in the pathway cofactor biosynthesis; biotin biosynthesis. The physiological role of BioH is to remove the methyl group introduced by BioC when the pimeloyl moiety is complete. It allows to synthesize pimeloyl-ACP via the fatty acid synthetic pathway through the hydrolysis of the ester bonds of pimeloyl-ACP esters. The polypeptide is Pimeloyl-[acyl-carrier protein] methyl ester esterase (Stenotrophomonas maltophilia (strain K279a)).